We begin with the raw amino-acid sequence, 342 residues long: Heat-inducible transcription repressor HrcA (342 aa).

The protein belongs to the HrcA family.

Negative regulator of class I heat shock genes (grpE-dnaK-dnaJ and groELS operons). Prevents heat-shock induction of these operons. This chain is Heat-inducible transcription repressor HrcA, found in Methylibium petroleiphilum (strain ATCC BAA-1232 / LMG 22953 / PM1).